Consider the following 930-residue polypeptide: Isoleucine--tRNA ligase (930 aa).

The 'HIGH' region signature appears at 57–67; it reads PYANGNIHVGH. Glu-554 contacts L-isoleucyl-5'-AMP. A 'KMSKS' region motif is present at residues 595-599; that stretch reads KMSKS. Position 598 (Lys-598) interacts with ATP. Cys-888, Cys-891, Cys-908, and Cys-911 together coordinate Zn(2+).

The protein belongs to the class-I aminoacyl-tRNA synthetase family. IleS type 1 subfamily. As to quaternary structure, monomer. Zn(2+) serves as cofactor.

It is found in the cytoplasm. The catalysed reaction is tRNA(Ile) + L-isoleucine + ATP = L-isoleucyl-tRNA(Ile) + AMP + diphosphate. In terms of biological role, catalyzes the attachment of isoleucine to tRNA(Ile). As IleRS can inadvertently accommodate and process structurally similar amino acids such as valine, to avoid such errors it has two additional distinct tRNA(Ile)-dependent editing activities. One activity is designated as 'pretransfer' editing and involves the hydrolysis of activated Val-AMP. The other activity is designated 'posttransfer' editing and involves deacylation of mischarged Val-tRNA(Ile). This chain is Isoleucine--tRNA ligase, found in Streptococcus pneumoniae (strain ATCC 700669 / Spain 23F-1).